The primary structure comprises 173 residues: Peptide methionine sulfoxide reductase MsrA (173 aa).

Cys10 is an active-site residue.

It belongs to the MsrA Met sulfoxide reductase family.

It catalyses the reaction L-methionyl-[protein] + [thioredoxin]-disulfide + H2O = L-methionyl-(S)-S-oxide-[protein] + [thioredoxin]-dithiol. The enzyme catalyses [thioredoxin]-disulfide + L-methionine + H2O = L-methionine (S)-S-oxide + [thioredoxin]-dithiol. Functionally, has an important function as a repair enzyme for proteins that have been inactivated by oxidation. Catalyzes the reversible oxidation-reduction of methionine sulfoxide in proteins to methionine. The sequence is that of Peptide methionine sulfoxide reductase MsrA from Nautilia profundicola (strain ATCC BAA-1463 / DSM 18972 / AmH).